The chain runs to 118 residues: Developmental pluripotency-associated protein 5A (118 aa).

Residues proline 24–leucine 86 enclose the KH; atypical domain.

Belongs to the KHDC1 family.

It localises to the cytoplasm. Its function is as follows. Involved in the maintenance of embryonic stem (ES) cell pluripotency. Dispensable for self-renewal of pluripotent ES cells and establishment of germ cells. Associates with specific target mRNAs. The protein is Developmental pluripotency-associated protein 5A (Dppa5a) of Mus musculus (Mouse).